The following is a 483-amino-acid chain: Regulatory protein ViaA (483 aa).

The protein belongs to the ViaA family. In terms of assembly, homodimer. Interacts with RavA.

The protein localises to the cytoplasm. Component of the RavA-ViaA chaperone complex, which may act on the membrane to optimize the function of some of the respiratory chains. ViaA stimulates the ATPase activity of RavA. The sequence is that of Regulatory protein ViaA from Shigella boydii serotype 18 (strain CDC 3083-94 / BS512).